The chain runs to 425 residues: SWI/SNF and RSC complexes subunit ssr3 (425 aa).

The segment covering 1 to 16 (MSNNSRLPENGVQSGN) has biased composition (polar residues). Residues 1 to 23 (MSNNSRLPENGVQSGNGEDAELK) are disordered. One can recognise an SWIB/MDM2 domain in the interval 201–278 (EHPERYKLSK…PELMNRFLEP (78 aa)).

It belongs to the SMARCD family. Component of the RSC complex composed of at least arp9, arp42, rsc1, rsc4, rsc7, rsc9, rsc58, sfh1, snf21, ssr1, ssr2, ssr3 and ssr4. The complex interacts with histone and histone variant components of centromeric chromatin. Component of the SWI/SNF global transcription activator complex composed of at least arp9, arp42, snf5, snf22, snf30, sbf59, sol1, ssr1, ssr2, ssr3, ssr4 and tfg3.

Its subcellular location is the cytoplasm. The protein resides in the nucleus. Its function is as follows. Component of the chromatin structure remodeling complex (RSC), which is involved in transcription regulation and nucleosome positioning. Controls particularly membrane and organelle development genes. Part of the SWI/SNF complex, an ATP-dependent chromatin remodeling complex, required for the positive and negative regulation of gene expression of a large number of genes. It changes chromatin structure by altering DNA-histone contacts within a nucleosome, leading eventually to a change in nucleosome position, thus facilitating or repressing binding of gene-specific transcription factors. This chain is SWI/SNF and RSC complexes subunit ssr3 (ssr3), found in Schizosaccharomyces pombe (strain 972 / ATCC 24843) (Fission yeast).